The sequence spans 315 residues: Hydrogenase-4 component C (315 aa).

Residues 1-10 (MRQTLCDGYL) lie on the Periplasmic side of the membrane. Residues 11 to 31 (VIFALAQAVILLMLTPLFTGI) form a helical membrane-spanning segment. The Cytoplasmic portion of the chain corresponds to 32–73 (SRQIRARMHSRRGPGIWQDYRDIHKLFKRQEVAPTSSGLMFR). The helical transmembrane segment at 74-94 (LMPWVLISSMLVLAMALPLFI) threads the bilayer. Over 95–98 (TVSP) the chain is Periplasmic. A helical transmembrane segment spans residues 99–119 (FAGGGDLITLIYLLALFRFFF). Over 120-140 (ALSGLDTGSPFAGVGASRELT) the chain is Cytoplasmic. A helical transmembrane segment spans residues 141 to 161 (LGILVEPMLILSLLVLALIAG). At 162 to 181 (STHIEMISNTLAMGWNSPLT) the chain is on the periplasmic side. Residues 182 to 202 (TVLALLACGFACFIEMGKIPF) traverse the membrane as a helical segment. At 203 to 228 (DVAEAEQELQEGPLTEYSGAGLALAK) the chain is on the cytoplasmic side. Residues 229-249 (WGLGLKQVVMASLFVALFLPF) form a helical membrane-spanning segment. The Periplasmic segment spans residues 250–256 (GRAQELS). Residues 257-277 (LACLLTSLVVTLLKVLLIFVL) form a helical membrane-spanning segment. Residues 278–289 (ASIAENTLARGR) are Cytoplasmic-facing. The chain crosses the membrane as a helical span at residues 290 to 310 (FLLIHHVTWLGFSLAALAWVF). The Periplasmic portion of the chain corresponds to 311–315 (WLTGL).

Belongs to the complex I subunit 1 family.

The protein localises to the cell inner membrane. Possible component of hydrogenase 4. The polypeptide is Hydrogenase-4 component C (Escherichia coli (strain K12)).